The following is a 251-amino-acid chain: Ribosomal RNA small subunit methyltransferase J (251 aa).

S-adenosyl-L-methionine contacts are provided by residues 100-101, 116-117, and Asp170; these read RD and ER.

The protein belongs to the methyltransferase superfamily. RsmJ family.

The protein resides in the cytoplasm. It catalyses the reaction guanosine(1516) in 16S rRNA + S-adenosyl-L-methionine = N(2)-methylguanosine(1516) in 16S rRNA + S-adenosyl-L-homocysteine + H(+). Its function is as follows. Specifically methylates the guanosine in position 1516 of 16S rRNA. This Haemophilus ducreyi (strain 35000HP / ATCC 700724) protein is Ribosomal RNA small subunit methyltransferase J.